We begin with the raw amino-acid sequence, 625 residues long: Mitochondrial Rho GTPase 1 (625 aa).

Residues 1–601 lie on the Cytoplasmic side of the membrane; sequence MSDDETLADV…LRRVFYLNDS (601 aa). Positions 3 to 170 constitute a Miro 1 domain; it reads DDETLADVRI…EIFYYAQKAV (168 aa). GTP contacts are provided by residues 16 to 23, 62 to 66, and 123 to 126; these read GDEGCGKT, DLSIK, and NKSD. EF-hand domains follow at residues 188–223 and 308–343; these read RARK…CFGI and EGVQ…CPVP. 10 residues coordinate Ca(2+): Asp-201, Asp-203, Asp-205, Tyr-207, Glu-212, Asp-321, Asp-323, Asp-325, Cys-327, and Glu-332. The 206-residue stretch at 420–625 folds into the Miro 2 domain; sequence HGTDRKVFQC…LAGFLVLKNL (206 aa). GTP-binding positions include 433–440, 470–474, and 537–540; these read GAKDAGKT, RVKEE, and TKVE. Residues 602–622 traverse the membrane as a helical; Anchor for type IV membrane protein segment; that stretch reads NLLSKITFGAAIVALAGFLVL. Topologically, residues 623–625 are mitochondrial intermembrane; that stretch reads KNL.

Belongs to the mitochondrial Rho GTPase family.

The protein localises to the mitochondrion outer membrane. Its function is as follows. Mitochondrial GTPase involved in mitochondrial trafficking. Probably involved in control of anterograde transport of mitochondria and their subcellular distribution. Plays a role in maintaining mitochondrial morphology. The sequence is that of Mitochondrial Rho GTPase 1 from Caenorhabditis elegans.